The following is a 936-amino-acid chain: Protein translocase subunit SecA (936 aa).

ATP-binding positions include Q87, 105–109 (GEGKT), and D515. Zn(2+) is bound by residues C920, C922, C931, and H932.

It belongs to the SecA family. As to quaternary structure, monomer and homodimer. Part of the essential Sec protein translocation apparatus which comprises SecA, SecYEG and auxiliary proteins SecDF-YajC and YidC. The cofactor is Zn(2+).

It localises to the cell inner membrane. The protein resides in the cytoplasm. It carries out the reaction ATP + H2O + cellular proteinSide 1 = ADP + phosphate + cellular proteinSide 2.. In terms of biological role, part of the Sec protein translocase complex. Interacts with the SecYEG preprotein conducting channel. Has a central role in coupling the hydrolysis of ATP to the transfer of proteins into and across the cell membrane, serving both as a receptor for the preprotein-SecB complex and as an ATP-driven molecular motor driving the stepwise translocation of polypeptide chains across the membrane. This chain is Protein translocase subunit SecA, found in Paraburkholderia phytofirmans (strain DSM 17436 / LMG 22146 / PsJN) (Burkholderia phytofirmans).